The following is a 354-amino-acid chain: Fusarinine C esterase sidJ (354 aa).

This sequence belongs to the sidJ hydrolase family. In terms of assembly, homodimer.

It catalyses the reaction fusarinine C + 3 H2O = 3 fusarinine + Fe(3+). Its function is as follows. Displays specific fusarinine C (FsC) esterase activity but does not hydrolyze triacetylfusarinine C (TAFC), which has the same core structure as fusarinine C. Both extra- and intracellular siderophores have been shown to be crucial for the virulence. Subsequent to chelation of iron and uptake, FsC and TAFC are hydrolyzed and the iron is transferred to the metabolism or to the intracellular siderophore ferricrocin (FC) for transport and storage of iron. The sequence is that of Fusarinine C esterase sidJ from Aspergillus fumigatus (strain ATCC MYA-4609 / CBS 101355 / FGSC A1100 / Af293) (Neosartorya fumigata).